The primary structure comprises 41 residues: Large ribosomal subunit protein bL36 (41 aa).

It belongs to the bacterial ribosomal protein bL36 family.

This is Large ribosomal subunit protein bL36 from Erythrobacter litoralis (strain HTCC2594).